A 288-amino-acid polypeptide reads, in one-letter code: uncharacterized protein (288 aa).

This is an uncharacterized protein from Haemophilus influenzae (strain ATCC 51907 / DSM 11121 / KW20 / Rd).